Reading from the N-terminus, the 224-residue chain is 7-cyano-7-deazaguanine synthase (224 aa).

An ATP-binding site is contributed by 9 to 19 (ISGGMDSTLCA). Residues Cys-190, Cys-198, Cys-201, and Cys-204 each contribute to the Zn(2+) site.

This sequence belongs to the QueC family. It depends on Zn(2+) as a cofactor.

It catalyses the reaction 7-carboxy-7-deazaguanine + NH4(+) + ATP = 7-cyano-7-deazaguanine + ADP + phosphate + H2O + H(+). It participates in purine metabolism; 7-cyano-7-deazaguanine biosynthesis. Its function is as follows. Catalyzes the ATP-dependent conversion of 7-carboxy-7-deazaguanine (CDG) to 7-cyano-7-deazaguanine (preQ(0)). The sequence is that of 7-cyano-7-deazaguanine synthase from Campylobacter jejuni subsp. jejuni serotype O:6 (strain 81116 / NCTC 11828).